Consider the following 72-residue polypeptide: NAD(P)H-quinone oxidoreductase subunit O (72 aa).

Belongs to the complex I NdhO subunit family. As to quaternary structure, NDH-1 can be composed of about 15 different subunits; different subcomplexes with different compositions have been identified which probably have different functions.

The protein localises to the cellular thylakoid membrane. The catalysed reaction is a plastoquinone + NADH + (n+1) H(+)(in) = a plastoquinol + NAD(+) + n H(+)(out). The enzyme catalyses a plastoquinone + NADPH + (n+1) H(+)(in) = a plastoquinol + NADP(+) + n H(+)(out). Functionally, NDH-1 shuttles electrons from an unknown electron donor, via FMN and iron-sulfur (Fe-S) centers, to quinones in the respiratory and/or the photosynthetic chain. The immediate electron acceptor for the enzyme in this species is believed to be plastoquinone. Couples the redox reaction to proton translocation, and thus conserves the redox energy in a proton gradient. Cyanobacterial NDH-1 also plays a role in inorganic carbon-concentration. This chain is NAD(P)H-quinone oxidoreductase subunit O, found in Trichodesmium erythraeum (strain IMS101).